We begin with the raw amino-acid sequence, 704 residues long: ATPase synthesis protein 25, mitochondrial (704 aa).

The N-terminal 47 residues, 1-47 (MNRVLSKGPKGLNGLLRACPSNSGRSFLYHSTYNVSSRTFWSASRLR), are a transit peptide targeting the mitochondrion. Disordered regions lie at residues 47–76 (RSED…ASSQ) and 283–313 (KQVS…DHVF). Over residues 66-76 (IGNNTSSASSQ) the composition is skewed to polar residues. The span at 289-299 (TKSDAPHEEVR) shows a compositional bias: basic and acidic residues.

This sequence belongs to the ATP25 family.

It localises to the mitochondrion inner membrane. Its function is as follows. Probable mitochondrial mRNA stabilization factor. In Aspergillus fumigatus (strain ATCC MYA-4609 / CBS 101355 / FGSC A1100 / Af293) (Neosartorya fumigata), this protein is ATPase synthesis protein 25, mitochondrial (atp25).